A 639-amino-acid chain; its full sequence is Lipoteichoic acid synthase 1 (639 aa).

Over 1–3 (MKK) the chain is Cytoplasmic. The chain crosses the membrane as a helical span at residues 4 to 24 (LFSYKLSFFVLAVILFWAKTY). Residues 25–41 (LSYKTEFNLGVKGTTQE) lie on the Extracellular side of the membrane. A helical transmembrane segment spans residues 42-62 (ILLIFNPFSSAVFFLGLALLA). The Cytoplasmic portion of the chain corresponds to 63–67 (KGRKS). The helical transmembrane segment at 68–88 (AIIMLIIDFLMTFVLYANILF) threads the bilayer. Over 89–116 (YRFFDDFLTFPNIKQSGNVGNMGDGIFS) the chain is Extracellular. Residues 117 to 137 (IMAGHDIFYFLDIIILIAVLI) traverse the membrane as a helical segment. Residues 138–150 (WRPELKEYKMKKR) are Cytoplasmic-facing. The helical transmembrane segment at 151–171 (FASLVILSGIALFFINLHYAE) threads the bilayer. Topologically, residues 172–639 (KDRPQLLTRT…YHYGKEKEIK (468 aa)) are extracellular. Mn(2+) is bound by residues Glu252 and Thr297. Residue Thr297 is part of the active site. His413 contributes to the substrate binding site. Mn(2+)-binding residues include Asp472 and His473.

It belongs to the LTA synthase family. In terms of processing, proteolytically cleaved by the type I signal peptidases SipT and SipV.

It localises to the cell membrane. The protein localises to the secreted. Its pathway is cell wall biogenesis; lipoteichoic acid biosynthesis. Its function is as follows. Catalyzes the polymerization of lipoteichoic acid (LTA) polyglycerol phosphate, a reaction that presumably uses phosphatidylglycerol (PG) as substrate. The polypeptide is Lipoteichoic acid synthase 1 (ltaS1) (Bacillus subtilis (strain 168)).